A 314-amino-acid polypeptide reads, in one-letter code: Ribosomal RNA small subunit methyltransferase H (314 aa).

S-adenosyl-L-methionine contacts are provided by residues 40–42 (GGH), Asp60, Phe85, Asp107, and Gln114.

The protein belongs to the methyltransferase superfamily. RsmH family.

The protein resides in the cytoplasm. The enzyme catalyses cytidine(1402) in 16S rRNA + S-adenosyl-L-methionine = N(4)-methylcytidine(1402) in 16S rRNA + S-adenosyl-L-homocysteine + H(+). In terms of biological role, specifically methylates the N4 position of cytidine in position 1402 (C1402) of 16S rRNA. This Hydrogenovibrio crunogenus (strain DSM 25203 / XCL-2) (Thiomicrospira crunogena) protein is Ribosomal RNA small subunit methyltransferase H.